The sequence spans 299 residues: Ribosomal RNA small subunit methyltransferase H (299 aa).

Residues Gly-36–His-38, Asp-55, Phe-82, Asp-97, and Gln-104 each bind S-adenosyl-L-methionine.

Belongs to the methyltransferase superfamily. RsmH family.

The protein localises to the cytoplasm. It catalyses the reaction cytidine(1402) in 16S rRNA + S-adenosyl-L-methionine = N(4)-methylcytidine(1402) in 16S rRNA + S-adenosyl-L-homocysteine + H(+). Specifically methylates the N4 position of cytidine in position 1402 (C1402) of 16S rRNA. The polypeptide is Ribosomal RNA small subunit methyltransferase H (Synechococcus sp. (strain RCC307)).